We begin with the raw amino-acid sequence, 143 residues long: Large ribosomal subunit protein uL11 (143 aa).

The protein belongs to the universal ribosomal protein uL11 family. Part of the ribosomal stalk of the 50S ribosomal subunit. Interacts with L10 and the large rRNA to form the base of the stalk. L10 forms an elongated spine to which L12 dimers bind in a sequential fashion forming a multimeric L10(L12)X complex. In terms of processing, one or more lysine residues are methylated.

Forms part of the ribosomal stalk which helps the ribosome interact with GTP-bound translation factors. The chain is Large ribosomal subunit protein uL11 from Herminiimonas arsenicoxydans.